Reading from the N-terminus, the 707-residue chain is DCC-interacting protein 13-alpha (707 aa).

The segment at 1–428 is required for RAB5A binding; sequence MPGIDKLPIE…PPTARTSSSG (428 aa). The region spanning 3–268 is the BAR domain; it reads GIDKLPIEET…DPLYLPDPDP (266 aa). The stretch at 234–257 forms a coiled coil; it reads QNVRREMDGDVETMQQTIEDLEVA. One can recognise a PH domain in the interval 277 to 375; the sequence is LTRKAGYLNA…WICTINNISK (99 aa). Disordered regions lie at residues 397 to 433, 466 to 490, and 636 to 707; these read AVTP…LGSE, GQAK…STKS, and EKQK…ESEA. A Phosphothreonine modification is found at Thr399. Ser401 is subject to Phosphoserine. A F&amp;H motif is present at residues 403 to 414; sequence SFQQRHESLRPG. Ser410 bears the Phosphoserine; by PKA mark. Residues 495–655 form the PID domain; it reads SILHQLFIVR…EKQQKELSKQ (161 aa). Residues 620 to 670 adopt a coiled-coil conformation; it reads LAKQIALHAELDRRASEKQKEIERVKEKQQKELSKQKQIEKDLEEQSRLIA. Basic and acidic residues predominate over residues 636–666; that stretch reads EKQKEIERVKEKQQKELSKQKQIEKDLEEQS. A compositionally biased stretch (low complexity) spans 679-691; that stretch reads GSEGQLVLSSSQS. Phosphoserine occurs at positions 691 and 694. Basic and acidic residues predominate over residues 698–707; it reads EEGKKRESEA.

As to quaternary structure, homodimer. Binds RAB5A/Rab5 through an N-terminal domain. This interaction is essential for its recruitment to endosomal membranes as well as its role in cell proliferation. Binds DCC and the catalytic domain of the inactive form of AKT2 through its PID domain. Binds PIK3CA and subunits of the NuRD/MeCP1 complex. Interacts with OCRL and INPP5B. Interacts with NTRK2. Interacts with APPL2; interaction is independent of follicle stimulating hormone stimulation; interaction is decreased by adiponectin in a time-dependent manner. Forms a complex with APPL2 and RUVBL2. Forms a complex comprising APPL2, RUVBL2, CTNNB1, HDAC1 and HDAC2; interaction reduces interaction between CTNNB1, HDAC1, HDAC2 and RUVBL2 leading to the decrease of deacetylase activity of this complex; affects the recruitment of repressive complexes to the Wnt target genes. Interacts with ANXA2. Interacts with TGFBR1; interaction is TGF beta dependent; mediates trafficking of the TGFBR1 from the endosomes to the nucleus via microtubules in a TRAF6-dependent manner. Interacts with PRKCZ. Interacts with PIK3R1 and APPL2. Interacts with ADIPOR1; ADIPOQ enhances this interaction; inhibites adiponectin-stimulated binding of APPL2 to ADIPOR1. In terms of processing, phosphorylation at Ser-410 by PKA severely impairs binding to OCRL. In terms of tissue distribution, expressed in insulin-target tissues including skeletal muscle, liver, fat, and brain.

It is found in the early endosome membrane. The protein localises to the nucleus. Its subcellular location is the cytoplasm. It localises to the endosome. The protein resides in the cell projection. It is found in the ruffle. The protein localises to the cytoplasmic vesicle. Its subcellular location is the phagosome. Its function is as follows. Multifunctional adapter protein that binds to various membrane receptors, nuclear factors and signaling proteins to regulate many processes, such as cell proliferation, immune response, endosomal trafficking and cell metabolism. Regulates signaling pathway leading to cell proliferation through interaction with RAB5A and subunits of the NuRD/MeCP1 complex. Functions as a positive regulator of innate immune response via activation of AKT1 signaling pathway by forming a complex with APPL1 and PIK3R1. Inhibits Fc-gamma receptor-mediated phagocytosis through PI3K/Akt signaling in macrophages. Regulates TLR4 signaling in activated macrophages. Involved in trafficking of the TGFBR1 from the endosomes to the nucleus via microtubules in a TRAF6-dependent manner. Plays a role in cell metabolism by regulating adiponecting and insulin signaling pathways. Required for fibroblast migration through HGF cell signaling. Positive regulator of beta-catenin/TCF-dependent transcription through direct interaction with RUVBL2/reptin resulting in the relief of RUVBL2-mediated repression of beta-catenin/TCF target genes by modulating the interactions within the beta-catenin-reptin-HDAC complex. The chain is DCC-interacting protein 13-alpha from Mus musculus (Mouse).